The following is a 244-amino-acid chain: Lymphotoxin-beta (244 aa).

Residues 1-18 (MGALGLEGRGGRLQGRGS) are Cytoplasmic-facing. Residues 19-48 (LLLAVAGATSLVTLLLAVPITVLAVLALVP) traverse the membrane as a helical; Signal-anchor for type II membrane protein segment. Over 49 to 244 (QDQGGLVTET…KTFFGAVMVG (196 aa)) the chain is Extracellular. In terms of domain architecture, THD spans 88 to 243 (PAAHLIGAPL…GKTFFGAVMV (156 aa)). Asn-222 carries an N-linked (GlcNAc...) asparagine glycan.

It belongs to the tumor necrosis factor family. In terms of assembly, heterotrimer of either two LTB and one LTA subunits or (less prevalent) one LTB and two LTA subunits. Spleen and thymus.

It is found in the membrane. Cytokine that binds to LTBR/TNFRSF3. May play a specific role in immune response regulation. Provides the membrane anchor for the attachment of the heterotrimeric complex to the cell surface. Isoform 2 is probably non-functional. This Homo sapiens (Human) protein is Lymphotoxin-beta (LTB).